We begin with the raw amino-acid sequence, 212 residues long: Ras-related protein Rab-2A (212 aa).

Ala-2 carries the N-acetylalanine modification. The tract at residues 2-19 (AYAYLFKYIIIGDTGVGK) is required for interaction with PRKCI. GTP-binding residues include Gly-16, Val-17, Gly-18, Lys-19, Ser-20, Cys-21, and Thr-38. Ser-20 is a Mg(2+) binding site. The Switch 1 signature appears at 37–42 (LTIGVE). Thr-38 and Asp-61 together coordinate Mg(2+). The short motif at 63–72 (AGQESFRSIT) is the Switch 2 element. GTP is bound by residues Gly-64, Asn-119, Lys-120, Asp-122, Ala-150, and Lys-151. Residues Cys-211 and Cys-212 are each lipidated (S-geranylgeranyl cysteine).

This sequence belongs to the small GTPase superfamily. Rab family. As to quaternary structure, interacts with PRKCI. Interacts with TRIP11. Interacts (in GTP-bound form) with GARIN1B. Interacts (GTP-bound) with HOPS complex component VPS39; interaction contributes to obtaining a functional HOPS complex that promotes autophagosome-lysosome membrane fusion driven by STX17-SNAP29-VAMP8. May interact with VPS41. Mg(2+) serves as cofactor. Prenylated. Prenylation is required for association with cellular membranes.

The protein localises to the endoplasmic reticulum-Golgi intermediate compartment membrane. It localises to the melanosome. The protein resides in the endoplasmic reticulum membrane. It is found in the golgi apparatus membrane. Its subcellular location is the cytoplasmic vesicle. The protein localises to the secretory vesicle. It localises to the acrosome. The protein resides in the autophagosome membrane. It catalyses the reaction GTP + H2O = GDP + phosphate + H(+). With respect to regulation, regulated by guanine nucleotide exchange factors (GEFs) which promote the exchange of bound GDP for free GTP, GTPase activating proteins (GAPs) which increase the GTP hydrolysis activity, and GDP dissociation inhibitors (GDIs) which inhibit the dissociation of the nucleotide from the GTPase. Functionally, the small GTPases Rab are key regulators of intracellular membrane trafficking, from the formation of transport vesicles to their fusion with membranes. Rabs cycle between active GTP-bound and inactive GDP-bound states. In their active state, drive transport of vesicular carriers from donor organelles to acceptor organelles to regulate the membrane traffic that maintains organelle identity and morphology. RAB2A regulates autophagy by promoting autophagosome-lysosome fusion via recruitment of the HOPS endosomal tethering complex; this process involves autophagosomal RAB2A and lysosomal RAB39A recruitment of HOPS subcomplexes VPS39-VPS11 and VPS41-VPS16-VPS18-VPS33A, respectively, which assemble into a functional complex to mediate membrane tethering and SNAREs-driven membrane fusion. Required for protein transport from the endoplasmic reticulum to the Golgi complex. Regulates the compacted morphology of the Golgi. Together with RAB2B, redundantly required for efficient autophagic flux. The polypeptide is Ras-related protein Rab-2A (RAB2A) (Canis lupus familiaris (Dog)).